The sequence spans 227 residues: Urease accessory protein UreF (227 aa).

Belongs to the UreF family. In terms of assembly, ureD, UreF and UreG form a complex that acts as a GTP-hydrolysis-dependent molecular chaperone, activating the urease apoprotein by helping to assemble the nickel containing metallocenter of UreC. The UreE protein probably delivers the nickel.

It localises to the cytoplasm. Functionally, required for maturation of urease via the functional incorporation of the urease nickel metallocenter. The sequence is that of Urease accessory protein UreF from Actinobacillus pleuropneumoniae serotype 3 (strain JL03).